A 113-amino-acid chain; its full sequence is Insulin (113 aa).

The N-terminal stretch at 1-24 (MAALWLQAFSLLVLMMVSWPGSQA) is a signal peptide. Intrachain disulfides connect cysteine 32–cysteine 99, cysteine 44–cysteine 112, and cysteine 98–cysteine 103. Positions 56–90 (DVDPLLGFLPPKAGGAVVQGGENEVTFKDQMEMMV) are cleaved as a propeptide — c peptide.

Belongs to the insulin family. Heterodimer of a B chain and an A chain linked by two disulfide bonds.

The protein localises to the secreted. Functionally, insulin decreases blood glucose concentration. It increases cell permeability to monosaccharides, amino acids and fatty acids. It accelerates glycolysis, the pentose phosphate cycle, and glycogen synthesis in liver. This is Insulin (ins) from Oreochromis niloticus (Nile tilapia).